Here is a 275-residue protein sequence, read N- to C-terminus: MGTLGRAFYSVGFWIRETGQALDRLGCRLQGKNYFREQLSRHRTLMNVFDKAPIVDKEAFVAPSASVIGDVHIGRGSSIWYGCVLRGDVNTVSVGSGTNIQDNSLVHVAKSNLSGKVHPTIIGDNVTIGHSAVLHGCTVEDETFIGMGATLLDGVVVEKHGMVAAGALVRQNTRIPSGEVWGGNPARFLRKLTDEEIAFISQSATNYSNLAQAHAAENAKPLNVIEFEKVLRKKHALKDEEYDSMLGIVRETPPELNLPNNILPDKETKRPSNVN.

A mitochondrion-targeting transit peptide spans Met-1–Arg-43. Residues Arg-86 to Asp-88 and Gln-101 to Asp-102 contribute to the substrate site. Zn(2+) contacts are provided by His-107, His-130, and His-135. Asn-209 serves as a coordination point for substrate. The interval Leu-256 to Asn-275 is disordered. Residues Pro-264–Asn-275 are compositionally biased toward basic and acidic residues.

The protein belongs to the gamma-class carbonic anhydrase family. As to quaternary structure, homotrimer. Component of the mitochondrial oxidoreductase respiratory chain complex I; element of the extra matrix-exposed domain, which is attached to the membrane arm of this complex. Zn(2+) is required as a cofactor.

The protein localises to the mitochondrion membrane. In terms of biological role, enzyme involved in the catabolism of H(2)CO(3) but that does not mediates the reversible hydration of carbon dioxide. Mediates complex I assembly in mitochondria and respiration. The chain is Gamma carbonic anhydrase 1, mitochondrial (GAMMACA1) from Arabidopsis thaliana (Mouse-ear cress).